The primary structure comprises 395 residues: MPIRTVMKANEAAAWAAKLAKPKVIAAFPITPSTLVPEKISEFVANGELDAEFIKVESEHSAISALVGASAAGVRTFTATASQGLALMHEVLFIAAGMRLPIVMAIGNRALSAPINIWNDWQDTISQRDTGWIQFYAENNQEALDLILLAYKVAEDERVLLPAMVGFDAFILTHTVEPVEIPDQEVVDEFLGEYEPKHAYLDPKRPITQGTLAFPAHYMEARYLVWEAMENARKVIDEAFAEFEKKFGRKYQKIEEYRTDDAEIIFVTMGSLAGTLKDWVDKKREEGYKVGAAKMTVYRPFPVEEIRELAKKTKVLAFIEKDISMGLYGAVFTDASAALINESEKPLMLDFIAGLGGRDVTFNQLDEALSIAKEALEKGKVEKPIHWIGLRKELL.

In terms of assembly, heterotetramer of one alpha, one beta, one delta and one gamma chain.

The enzyme catalyses 2 oxidized [2Fe-2S]-[ferredoxin] + pyruvate + CoA = 2 reduced [2Fe-2S]-[ferredoxin] + acetyl-CoA + CO2 + H(+). This chain is Pyruvate synthase subunit PorA (porA), found in Pyrococcus abyssi (strain GE5 / Orsay).